The primary structure comprises 71 residues: uncharacterized protein (71 aa).

Residues 2–24 (IIAIVAVVIFLLNFLTPYGYMPM) traverse the membrane as a helical segment. The disordered stretch occupies residues 48-71 (PAESSSNGGSMITKPSTGACQGGR). Residues 49 to 71 (AESSSNGGSMITKPSTGACQGGR) are compositionally biased toward polar residues.

It localises to the membrane. This is an uncharacterized protein from Archaeoglobus fulgidus (strain ATCC 49558 / DSM 4304 / JCM 9628 / NBRC 100126 / VC-16).